Reading from the N-terminus, the 262-residue chain is Small ribosomal subunit protein eS4A (262 aa).

The S4 RNA-binding domain occupies 42-105 (LPLIVFLRNR…GEHFRLVYDI (64 aa)).

Belongs to the eukaryotic ribosomal protein eS4 family. Component of the small ribosomal subunit (SSU). Mature yeast ribosomes consist of a small (40S) and a large (60S) subunit. The 40S small subunit contains 1 molecule of ribosomal RNA (18S rRNA) and at least 33 different proteins. The large 60S subunit contains 3 rRNA molecules (25S, 5.8S and 5S rRNA) and at least 46 different proteins.

It is found in the cytoplasm. Its function is as follows. Component of the ribosome, a large ribonucleoprotein complex responsible for the synthesis of proteins in the cell. The small ribosomal subunit (SSU) binds messenger RNAs (mRNAs) and translates the encoded message by selecting cognate aminoacyl-transfer RNA (tRNA) molecules. The large subunit (LSU) contains the ribosomal catalytic site termed the peptidyl transferase center (PTC), which catalyzes the formation of peptide bonds, thereby polymerizing the amino acids delivered by tRNAs into a polypeptide chain. The nascent polypeptides leave the ribosome through a tunnel in the LSU and interact with protein factors that function in enzymatic processing, targeting, and the membrane insertion of nascent chains at the exit of the ribosomal tunnel. This is Small ribosomal subunit protein eS4A (rps401) from Schizosaccharomyces pombe (strain 972 / ATCC 24843) (Fission yeast).